A 124-amino-acid chain; its full sequence is Small ribosomal subunit protein uS13 (124 aa).

The segment at 97 to 124 (PVRGQRTKTNARTRKGPKRTIAGKKKAR) is disordered.

This sequence belongs to the universal ribosomal protein uS13 family. Part of the 30S ribosomal subunit. Forms a loose heterodimer with protein S19. Forms two bridges to the 50S subunit in the 70S ribosome.

Located at the top of the head of the 30S subunit, it contacts several helices of the 16S rRNA. In the 70S ribosome it contacts the 23S rRNA (bridge B1a) and protein L5 of the 50S subunit (bridge B1b), connecting the 2 subunits; these bridges are implicated in subunit movement. Contacts the tRNAs in the A and P-sites. The chain is Small ribosomal subunit protein uS13 from Mycolicibacterium gilvum (strain PYR-GCK) (Mycobacterium gilvum (strain PYR-GCK)).